The sequence spans 271 residues: Formamidopyrimidine-DNA glycosylase (271 aa).

Catalysis depends on proline 2, which acts as the Schiff-base intermediate with DNA. The active-site Proton donor is the glutamate 3. Catalysis depends on lysine 56, which acts as the Proton donor; for beta-elimination activity. 3 residues coordinate DNA: histidine 89, arginine 107, and lysine 151. An FPG-type zinc finger spans residues 236-270; sequence NVYGRAGLQCRQCGTPVRLSRQGQRSTYFCPHCQR. Arginine 260 functions as the Proton donor; for delta-elimination activity in the catalytic mechanism.

The protein belongs to the FPG family. As to quaternary structure, monomer. Zn(2+) serves as cofactor.

The catalysed reaction is Hydrolysis of DNA containing ring-opened 7-methylguanine residues, releasing 2,6-diamino-4-hydroxy-5-(N-methyl)formamidopyrimidine.. The enzyme catalyses 2'-deoxyribonucleotide-(2'-deoxyribose 5'-phosphate)-2'-deoxyribonucleotide-DNA = a 3'-end 2'-deoxyribonucleotide-(2,3-dehydro-2,3-deoxyribose 5'-phosphate)-DNA + a 5'-end 5'-phospho-2'-deoxyribonucleoside-DNA + H(+). Functionally, involved in base excision repair of DNA damaged by oxidation or by mutagenic agents. Acts as a DNA glycosylase that recognizes and removes damaged bases. Has a preference for oxidized purines, such as 7,8-dihydro-8-oxoguanine (8-oxoG). Has AP (apurinic/apyrimidinic) lyase activity and introduces nicks in the DNA strand. Cleaves the DNA backbone by beta-delta elimination to generate a single-strand break at the site of the removed base with both 3'- and 5'-phosphates. The protein is Formamidopyrimidine-DNA glycosylase of Acidovorax ebreus (strain TPSY) (Diaphorobacter sp. (strain TPSY)).